Reading from the N-terminus, the 831-residue chain is Thymine dioxygenase JBP1-B (831 aa).

The thymine dioxygenase stretch occupies residues 80-282 (VVGGVLLPGA…RLTCVCYYRA (203 aa)). Histidine 207, aspartate 209, and histidine 257 together coordinate Fe cation. Arginine 273 serves as a coordination point for 2-oxoglutarate. Positions 409 to 578 (LGGALKAAEE…IEEARRRGNA (170 aa)) are DNA-binding JBP1 domain.

It belongs to the TET family. JBP1 subfamily. In terms of assembly, monomer. Binds to DNA as a monomer. The cofactor is Fe(2+).

Its subcellular location is the nucleus. It carries out the reaction thymine + 2-oxoglutarate + O2 = 5-hydroxymethyluracil + succinate + CO2. In terms of biological role, dioxygenase that catalyzes the first step of DNA base J (beta-d-glucosyl-HOMedU) biosynthesis by converting thymine to 5-hydroxymethyluracil (HOMedU). DNA base J is a hypermodified thymidine residue found in the genome of kinetoplastid parasites, which is localized primarily to repetitive DNA, namely the telomeres, and is implicated in the regulation of antigenic variation. Also specifically binds to base J-containing DNA (J-DNA). Involved in propagation and maintenance of DNA base J synthesis initiated by JBP2 by specifically binding already synthesized DNA base J and propagating J synthesis. Thymine dioxygenase activity and J-DNA-binding are independent functions. This chain is Thymine dioxygenase JBP1-B (JBP1B), found in Trypanosoma cruzi (strain CL Brener).